An 80-amino-acid polypeptide reads, in one-letter code: Translation initiation factor IF-1, chloroplastic (80 aa).

Residues 1-74 enclose the S1-like domain; that stretch reads MKEQKWIHEG…TRGRIIYRLR (74 aa).

It belongs to the IF-1 family. Component of the 30S ribosomal translation pre-initiation complex which assembles on the 30S ribosome in the order IF-2 and IF-3, IF-1 and N-formylmethionyl-tRNA(fMet); mRNA recruitment can occur at any time during PIC assembly.

It is found in the plastid. The protein resides in the chloroplast. One of the essential components for the initiation of protein synthesis. Stabilizes the binding of IF-2 and IF-3 on the 30S subunit to which N-formylmethionyl-tRNA(fMet) subsequently binds. Helps modulate mRNA selection, yielding the 30S pre-initiation complex (PIC). Upon addition of the 50S ribosomal subunit IF-1, IF-2 and IF-3 are released leaving the mature 70S translation initiation complex. The polypeptide is Translation initiation factor IF-1, chloroplastic (Illicium parviflorum (Yellow anise tree)).